The sequence spans 306 residues: Protoheme IX farnesyltransferase (306 aa).

A run of 8 helical transmembrane segments spans residues 31 to 50, 55 to 77, 104 to 124, 125 to 145, 168 to 188, 218 to 235, 238 to 258, and 286 to 306; these read VIELLLVTTAPVMILAQGGW, LILGVLVGGTLSAGSANAFNCYI, LVFAWIIGVASIIWLGVISNW, LAAALSLAAILFYVFVYTLWL, WAAVTGDISWAPVILFMIVFL, GRAAVGLQTILYSWATLA, LLLIPVAGMGLVYTLAALAGG, and ASISYLSLLFLAVGIDPLLPF.

The protein belongs to the UbiA prenyltransferase family. Protoheme IX farnesyltransferase subfamily.

Its subcellular location is the cell membrane. It carries out the reaction heme b + (2E,6E)-farnesyl diphosphate + H2O = Fe(II)-heme o + diphosphate. It functions in the pathway porphyrin-containing compound metabolism; heme O biosynthesis; heme O from protoheme: step 1/1. Converts heme B (protoheme IX) to heme O by substitution of the vinyl group on carbon 2 of heme B porphyrin ring with a hydroxyethyl farnesyl side group. The polypeptide is Protoheme IX farnesyltransferase (Clavibacter sepedonicus (Clavibacter michiganensis subsp. sepedonicus)).